Reading from the N-terminus, the 444-residue chain is Phosphomethylpyrimidine synthase (444 aa).

Substrate-binding positions include N80, M109, Y138, H174, 194-196, 235-238, and E274; these read SRG and DSLR. H278 lines the Zn(2+) pocket. A substrate-binding site is contributed by Y301. H342 serves as a coordination point for Zn(2+). Positions 422, 425, and 430 each coordinate [4Fe-4S] cluster.

The protein belongs to the ThiC family. Homodimer. It depends on [4Fe-4S] cluster as a cofactor.

The catalysed reaction is 5-amino-1-(5-phospho-beta-D-ribosyl)imidazole + S-adenosyl-L-methionine = 4-amino-2-methyl-5-(phosphooxymethyl)pyrimidine + CO + 5'-deoxyadenosine + formate + L-methionine + 3 H(+). It participates in cofactor biosynthesis; thiamine diphosphate biosynthesis. In terms of biological role, catalyzes the synthesis of the hydroxymethylpyrimidine phosphate (HMP-P) moiety of thiamine from aminoimidazole ribotide (AIR) in a radical S-adenosyl-L-methionine (SAM)-dependent reaction. The protein is Phosphomethylpyrimidine synthase of Nitratiruptor sp. (strain SB155-2).